The chain runs to 228 residues: N-(5'-phosphoribosyl)anthranilate isomerase (228 aa).

This sequence belongs to the TrpF family.

It carries out the reaction N-(5-phospho-beta-D-ribosyl)anthranilate = 1-(2-carboxyphenylamino)-1-deoxy-D-ribulose 5-phosphate. It functions in the pathway amino-acid biosynthesis; L-tryptophan biosynthesis; L-tryptophan from chorismate: step 3/5. The sequence is that of N-(5'-phosphoribosyl)anthranilate isomerase from Azorhizobium caulinodans (strain ATCC 43989 / DSM 5975 / JCM 20966 / LMG 6465 / NBRC 14845 / NCIMB 13405 / ORS 571).